The following is a 372-amino-acid chain: tRNA-specific 2-thiouridylase MnmA (372 aa).

Residues 16–23 (GMSGGVDS) and methionine 42 each bind ATP. An interaction with target base in tRNA region spans residues 102–104 (NPD). Cysteine 107 acts as the Nucleophile in catalysis. A disulfide bond links cysteine 107 and cysteine 205. An ATP-binding site is contributed by glycine 132. The tract at residues 155–157 (KDQ) is interaction with tRNA. Residue cysteine 205 is the Cysteine persulfide intermediate of the active site. Residues 317-318 (RY) are interaction with tRNA.

It belongs to the MnmA/TRMU family.

It is found in the cytoplasm. The enzyme catalyses S-sulfanyl-L-cysteinyl-[protein] + uridine(34) in tRNA + AH2 + ATP = 2-thiouridine(34) in tRNA + L-cysteinyl-[protein] + A + AMP + diphosphate + H(+). Its function is as follows. Catalyzes the 2-thiolation of uridine at the wobble position (U34) of tRNA, leading to the formation of s(2)U34. In Shewanella oneidensis (strain ATCC 700550 / JCM 31522 / CIP 106686 / LMG 19005 / NCIMB 14063 / MR-1), this protein is tRNA-specific 2-thiouridylase MnmA.